A 391-amino-acid chain; its full sequence is Cell cycle checkpoint control protein RAD9A (391 aa).

Residue Tyr28 is modified to Phosphotyrosine. The interval 51 to 91 is possesses 3'-5' exonuclease activity; it reads FLFAPLFFQQYQAATPGQDLLRCKILMKSFLSVFRSLAMLE. The tract at residues 266 to 391 is sufficient for interaction with ABL1; it reads SDTDSHSQDL…VLAEDSEGEG (126 aa). The segment covering 268 to 282 has biased composition (basic and acidic residues); it reads TDSHSQDLGSPERHQ. Disordered stretches follow at residues 268–301 and 319–391; these read TDSH…FAND and SRVL…EGEG. Phosphoserine is present on residues Ser272, Ser277, and Ser328. Ser341 is modified (phosphoserine; by CK2). Residues Ser375 and Ser380 each carry the phosphoserine modification. Ser387 carries the post-translational modification Phosphoserine; by CK2.

It belongs to the rad9 family. Component of the toroidal 9-1-1 (RAD9-RAD1-HUS1) complex, composed of RAD9A, RAD1 and HUS1. The 9-1-1 complex associates with LIG1, POLB, FEN1, RAD17, HDAC1, RPA1 and RPA2. The 9-1-1 complex associates with the RAD17-RFC complex. RAD9A interacts with BCL2L1, FEN1, RAD9B, ABL1, RPA1, ATAD5 and RPA2. Interacts with DNAJC7. Interacts (when phosphorylated) with TOPBP1. In terms of processing, constitutively phosphorylated on serine and threonine amino acids in absence of DNA damage. Hyperphosphorylated by PRKCD and ABL1 upon DNA damage. Its phosphorylation by PRKCD may be required for the formation of the 9-1-1 complex. Phosphorylated at Ser-341 and Ser-387 by CK2, promoting interaction with TOPBP1.

It localises to the nucleus. It carries out the reaction Exonucleolytic cleavage in the 3'- to 5'-direction to yield nucleoside 5'-phosphates.. In terms of biological role, component of the 9-1-1 cell-cycle checkpoint response complex that plays a major role in DNA repair. The 9-1-1 complex is recruited to DNA lesion upon damage by the RAD17-replication factor C (RFC) clamp loader complex. Acts then as a sliding clamp platform on DNA for several proteins involved in long-patch base excision repair (LP-BER). The 9-1-1 complex stimulates DNA polymerase beta (POLB) activity by increasing its affinity for the 3'-OH end of the primer-template and stabilizes POLB to those sites where LP-BER proceeds; endonuclease FEN1 cleavage activity on substrates with double, nick, or gap flaps of distinct sequences and lengths; and DNA ligase I (LIG1) on long-patch base excision repair substrates. The 9-1-1 complex is necessary for the recruitment of RHNO1 to sites of double-stranded breaks (DSB) occurring during the S phase. RAD9A possesses 3'-&gt;5' double stranded DNA exonuclease activity. The chain is Cell cycle checkpoint control protein RAD9A (RAD9A) from Homo sapiens (Human).